Here is a 250-residue protein sequence, read N- to C-terminus: MVLTSDHLDKKNIRKIEYKGEDSFSNSMSKLPLQGGMSDSIFMASISDFSNWSRLSSLWPLLYGTSCCFIEFASLIGSRFDFDRYGLVPRSSPRQADLIVTAGTITMKMAPSLIRLYEQMPEPKYVIAMGACTITGGMFSTDSYSTVRGVDKLIPVDIYLPGCPPKPEAIMDAVTKLRKKIARNRFVNRASRPIRTKYFSISHQLNLVPGTCAGKYNWDRENCGTKLAPANFSENCQKFANEHDELKSAI.

[4Fe-4S] cluster-binding residues include Cys67, Cys68, Cys132, and Cys163.

This sequence belongs to the complex I 20 kDa subunit family. NDH is composed of at least 16 different subunits, 5 of which are encoded in the nucleus. [4Fe-4S] cluster serves as cofactor.

Its subcellular location is the plastid. The protein resides in the chloroplast thylakoid membrane. The enzyme catalyses a plastoquinone + NADH + (n+1) H(+)(in) = a plastoquinol + NAD(+) + n H(+)(out). It carries out the reaction a plastoquinone + NADPH + (n+1) H(+)(in) = a plastoquinol + NADP(+) + n H(+)(out). Its function is as follows. NDH shuttles electrons from NAD(P)H:plastoquinone, via FMN and iron-sulfur (Fe-S) centers, to quinones in the photosynthetic chain and possibly in a chloroplast respiratory chain. The immediate electron acceptor for the enzyme in this species is believed to be plastoquinone. Couples the redox reaction to proton translocation, and thus conserves the redox energy in a proton gradient. This chain is NAD(P)H-quinone oxidoreductase subunit K, chloroplastic, found in Adiantum capillus-veneris (Maidenhair fern).